The following is a 500-amino-acid chain: tRNA (guanine(37)-N(1))-methyltransferase (500 aa).

S-adenosyl-L-methionine is bound by residues His215, Asp253–Leu254, Asp281–Ala282, and Asn312. The disordered stretch occupies residues Gln463 to Lys500. Over residues Asn488–Lys500 the composition is skewed to basic and acidic residues.

It belongs to the class I-like SAM-binding methyltransferase superfamily. TRM5/TYW2 family. Monomer.

It localises to the mitochondrion matrix. It is found in the nucleus. The protein localises to the cytoplasm. The catalysed reaction is guanosine(37) in tRNA + S-adenosyl-L-methionine = N(1)-methylguanosine(37) in tRNA + S-adenosyl-L-homocysteine + H(+). In terms of biological role, specifically methylates the N1 position of guanosine-37 in various cytoplasmic and mitochondrial tRNAs. Methylation is not dependent on the nature of the nucleoside 5' of the target nucleoside. This is the first step in the biosynthesis of wybutosine (yW), a modified base adjacent to the anticodon of tRNAs and required for accurate decoding. The sequence is that of tRNA (guanine(37)-N(1))-methyltransferase from Anopheles darlingi (Mosquito).